Consider the following 351-residue polypeptide: Probable cell division control protein 7 homolog 1 (351 aa).

The Protein kinase domain maps to Y21–F341. ATP-binding positions include I27–V35 and K50. D137 serves as the catalytic Proton acceptor.

The protein belongs to the protein kinase superfamily. Ser/Thr protein kinase family. CDC7 subfamily. Mg(2+) is required as a cofactor.

It catalyses the reaction L-seryl-[protein] + ATP = O-phospho-L-seryl-[protein] + ADP + H(+). The catalysed reaction is L-threonyl-[protein] + ATP = O-phospho-L-threonyl-[protein] + ADP + H(+). Its function is as follows. Serine/threonine-protein kinase. Needed for the initiation of DNA synthesis during mitosis as well as for synaptonemal complex formation and commitment to recombination during meiosis. This is Probable cell division control protein 7 homolog 1 (CDC7-1) from Encephalitozoon cuniculi (strain GB-M1) (Microsporidian parasite).